A 48-amino-acid chain; its full sequence is MPQLIPFYFLNQLTYGFLLMTILLVLFSQFFLPMILRLYLTRLFISKL.

The chain crosses the membrane as a helical span at residues 16 to 36; it reads GFLLMTILLVLFSQFFLPMIL.

Belongs to the ATPase protein 8 family. F-type ATPases have 2 components, CF(1) - the catalytic core - and CF(0) - the membrane proton channel.

The protein resides in the mitochondrion membrane. Functionally, mitochondrial membrane ATP synthase (F(1)F(0) ATP synthase or Complex V) produces ATP from ADP in the presence of a proton gradient across the membrane which is generated by electron transport complexes of the respiratory chain. F-type ATPases consist of two structural domains, F(1) - containing the extramembraneous catalytic core and F(0) - containing the membrane proton channel, linked together by a central stalk and a peripheral stalk. During catalysis, ATP synthesis in the catalytic domain of F(1) is coupled via a rotary mechanism of the central stalk subunits to proton translocation. Part of the complex F(0) domain. Minor subunit located with subunit a in the membrane. The chain is ATP synthase protein 8 (ATP8) from Vanderwaltozyma polyspora (strain ATCC 22028 / DSM 70294 / BCRC 21397 / CBS 2163 / NBRC 10782 / NRRL Y-8283 / UCD 57-17) (Kluyveromyces polysporus).